The sequence spans 165 residues: Probable bacterial non-heme ferritin-like protein (165 aa).

One can recognise a Ferritin-like diiron domain in the interval 1 to 145 (MLSENVVKLL…SILDKLNFLG (145 aa)). Fe cation-binding residues include glutamate 17, glutamate 50, histidine 53, glutamate 94, and glutamine 127.

It belongs to the ferritin family. Prokaryotic subfamily.

It localises to the cytoplasm. The sequence is that of Probable bacterial non-heme ferritin-like protein (ftnB) from Haemophilus influenzae (strain ATCC 51907 / DSM 11121 / KW20 / Rd).